The sequence spans 308 residues: D-alanine--D-alanine ligase (308 aa).

Residues 103 to 302 form the ATP-grasp domain; that stretch reads KTVMATAGVP…FDELVQWMVE (200 aa). 130-184 serves as a coordination point for ATP; sequence MAPPYVIKPVADGSSVGVFIVTEDQAHPPQELFRDDWPHGEELLVEKYIAGRELT. The Mg(2+) site is built by D252, E269, and N271.

This sequence belongs to the D-alanine--D-alanine ligase family. The cofactor is Mg(2+). Mn(2+) serves as cofactor.

It localises to the cytoplasm. The catalysed reaction is 2 D-alanine + ATP = D-alanyl-D-alanine + ADP + phosphate + H(+). It participates in cell wall biogenesis; peptidoglycan biosynthesis. Functionally, cell wall formation. This chain is D-alanine--D-alanine ligase, found in Afipia carboxidovorans (strain ATCC 49405 / DSM 1227 / KCTC 32145 / OM5) (Oligotropha carboxidovorans).